Reading from the N-terminus, the 132-residue chain is MSNKFLGTWKLTSSENFDEYMKALGVGLGTRSLGNLAGPTVIISKSGDVITIRTESGFKNTEISFKLGQEFEETTADNRKTKSTVTLAGGKLNQVQKWNGNETTIKRELVDGKMVVECSMASVVCTRIYEQV.

Ser-2 carries the N-acetylserine modification. Residue Arg-107 participates in (9Z)-octadecenoate binding. Arg-107 contributes to the hexadecanoate binding site. A disulfide bridge connects residues Cys-118 and Cys-125. 127–129 (RIY) serves as a coordination point for (9Z)-octadecenoate. Residue 127-129 (RIY) participates in hexadecanoate binding.

It belongs to the calycin superfamily. Fatty-acid binding protein (FABP) family. In terms of assembly, monomer. Detected in spinal cord (at protein level).

It is found in the cytoplasm. In terms of biological role, may play a role in lipid transport protein in Schwann cells. May bind cholesterol. This is Myelin P2 protein (PMP2) from Equus caballus (Horse).